The primary structure comprises 362 residues: Stress response regulator protein 1 (362 aa).

2 disordered regions span residues 1-39 and 163-188; these read MTRL…SLVQ and TLKS…ETKT. A compositionally biased stretch (low complexity) spans 19 to 39; sequence PSQLLHSASLSSSPSSPSLVQ. The Response regulatory domain occupies 209-327; the sequence is KFLLVDDNLI…LDFMANVIDE (119 aa). Residue D260 is modified to 4-aspartylphosphate.

In terms of biological role, required for stress adaptation, morphogenesis and virulence. In Lodderomyces elongisporus (strain ATCC 11503 / CBS 2605 / JCM 1781 / NBRC 1676 / NRRL YB-4239) (Yeast), this protein is Stress response regulator protein 1 (SRR1).